A 100-amino-acid polypeptide reads, in one-letter code: Large ribosomal subunit protein uL23 (100 aa).

This sequence belongs to the universal ribosomal protein uL23 family. As to quaternary structure, part of the 50S ribosomal subunit. Contacts protein L29, and trigger factor when it is bound to the ribosome.

One of the early assembly proteins it binds 23S rRNA. One of the proteins that surrounds the polypeptide exit tunnel on the outside of the ribosome. Forms the main docking site for trigger factor binding to the ribosome. This chain is Large ribosomal subunit protein uL23, found in Escherichia coli O157:H7.